A 127-amino-acid polypeptide reads, in one-letter code: Glycine cleavage system H protein 1 (127 aa).

Residues 20-101 (LLTVGITAYA…LGEAWFFRFR (82 aa)) form the Lipoyl-binding domain. Lys-60 carries the N6-lipoyllysine modification.

The protein belongs to the GcvH family. As to quaternary structure, the glycine cleavage system is composed of four proteins: P, T, L and H. It depends on (R)-lipoate as a cofactor.

Functionally, the glycine cleavage system catalyzes the degradation of glycine. The H protein shuttles the methylamine group of glycine from the P protein to the T protein. The chain is Glycine cleavage system H protein 1 from Pseudomonas aeruginosa (strain ATCC 15692 / DSM 22644 / CIP 104116 / JCM 14847 / LMG 12228 / 1C / PRS 101 / PAO1).